We begin with the raw amino-acid sequence, 241 residues long: Uridylate kinase (241 aa).

Residues 10-13, Gly-53, and Arg-57 each bind ATP; that span reads KLSG. UMP is bound by residues Asp-72 and 133–140; that span reads AGSPYFST. The ATP site is built by Asn-161, Tyr-167, and Asp-170.

This sequence belongs to the UMP kinase family. Homohexamer.

Its subcellular location is the cytoplasm. The catalysed reaction is UMP + ATP = UDP + ADP. Its pathway is pyrimidine metabolism; CTP biosynthesis via de novo pathway; UDP from UMP (UMPK route): step 1/1. With respect to regulation, inhibited by UTP. In terms of biological role, catalyzes the reversible phosphorylation of UMP to UDP. The sequence is that of Uridylate kinase from Aster yellows witches'-broom phytoplasma (strain AYWB).